We begin with the raw amino-acid sequence, 295 residues long: 4-diphosphocytidyl-2-C-methyl-D-erythritol kinase (295 aa).

Residue lysine 15 is part of the active site. Residue proline 102 to serine 112 coordinates ATP. Residue aspartate 144 is part of the active site.

It belongs to the GHMP kinase family. IspE subfamily.

It carries out the reaction 4-CDP-2-C-methyl-D-erythritol + ATP = 4-CDP-2-C-methyl-D-erythritol 2-phosphate + ADP + H(+). It participates in isoprenoid biosynthesis; isopentenyl diphosphate biosynthesis via DXP pathway; isopentenyl diphosphate from 1-deoxy-D-xylulose 5-phosphate: step 3/6. Its function is as follows. Catalyzes the phosphorylation of the position 2 hydroxy group of 4-diphosphocytidyl-2C-methyl-D-erythritol. This Mesorhizobium japonicum (strain LMG 29417 / CECT 9101 / MAFF 303099) (Mesorhizobium loti (strain MAFF 303099)) protein is 4-diphosphocytidyl-2-C-methyl-D-erythritol kinase.